An 802-amino-acid chain; its full sequence is Pyrophosphate-energized membrane proton pump 2 (802 aa).

Helical transmembrane passes span 45-65 (VLSI…ASTS), 66-86 (PIIV…IYLT), 118-138 (YSTI…IYLF), 160-180 (VAAF…GMWV), 206-226 (AGGF…AILY), and 246-266 (LPLL…FAQL). A substrate-binding site is contributed by lysine 273. The Mg(2+) site is built by aspartate 276, aspartate 280, and aspartate 306. 5 consecutive transmembrane segments (helical) span residues 348–368 (FILF…IGIL), 386–406 (MAVL…TFGA), 421–441 (WFNF…FVWI), 468–488 (IIAG…TISV), and 511–531 (GGLF…AYVL). Mg(2+)-binding residues include aspartate 541 and asparagine 568. A run of 4 helical transmembrane segments spans residues 577 to 597 (FAIG…MDEV), 615 to 635 (VFVG…WACA), 686 to 706 (GALA…LGYY), and 716 to 736 (VVAS…LFLN). Positions 743 and 773 each coordinate Mg(2+). Lysine 776 provides a ligand contact to substrate. A helical transmembrane segment spans residues 782–802 (SIHVLIKMLATITLVMAPVFL).

It belongs to the H(+)-translocating pyrophosphatase (TC 3.A.10) family. K(+)-insensitive subfamily. Monomer. In terms of tissue distribution, ubiquitous. Mostly expressed in cotyledons, roots and flowers. Especially high levels in trichomes, sepals and stamen filaments.

The protein resides in the golgi apparatus membrane. The enzyme catalyses diphosphate + H2O + H(+)(in) = 2 phosphate + 2 H(+)(out). Its activity is regulated as follows. Activated by Mg(+) but not by K(+). Inhibited by Ca(2+). Its function is as follows. Pyrophosphatase active in both inorganic pyrophosphate hydrolysis and H(+) translocation. The polypeptide is Pyrophosphate-energized membrane proton pump 2 (AVPL1) (Arabidopsis thaliana (Mouse-ear cress)).